Consider the following 873-residue polypeptide: MAEMEKEGRPPENKRSRKPAHPVKREINEEMKNFAENTMNELLGWYGYDKVELKDGEDIEFRSYPTDGESRQHISVLKENSLPKPKLPEDSVISPYNISTGYSGLATGNGLSDSPAGSKDHGSVPIIVPLIPPPFIKPPAEDDVSNVQIMCAWCQKVGIKRYSLSMGSEVKSFCSEKCFAACRRAYFKRNKARDEDGHAENFPQQHYAKETPRLAFKNNCELLVCDWCKHIRHTKEYLDFGDGERRLQFCSAKCLNQYKMDIFYKETQANLPAGLCSTLHPPMENKAEGTGVQLLTPDSWNIPLTDARRKAPSPVATAGQSQGPGPSASTTVSPSDTANCSVTKIPTPVPKSIPISETPNIPPVSVQPPASIGPPLGVPPRSPPMVMTNRGPVPLPIFMEQQIMQQIRPPFIRGPPHHASNPNSPLSNPMLPGIGPPPGGPRNLGPTSSPMHRPMLSPHIHPPSTPTMPGNPPGLLPPPPPGAPLPSLPFPPVSMMPNGPMPVPQMMNFGLPSLAPLVPPPTLLVPYPVIVPLPVPIPIPIPIPHVSDSKPPNGFSSNGENFIPNAPGDSAAAGGKPSGHSLSPRDSKQGSSKSADSPPGCSGQALSLAPTPAEHGRSEVVDLTRRAGSPPGPPGAGGQLGFPGVLQGPQDGVIDLTVGHRARLHNVIHRALHAHVKAEREPSAAERRTCGGCRDGHCSPPAAGDPGPGAPAGPEAAAACNVIVNGTRGAAAEGAKSAEPPPEQPPPPPPPAPPKKLLSPEEPAVSELESVKENNCASNCHLDGEAAKKLMGEEALAGGDKSDPNLNNPADEDHAYALRMLPKTGCVIQPVPKPAEKAAMAPCIISSPMLSAGPEDLEPPLKRRCLRIRNQNK.

Over residues 1 to 14 (MAEMEKEGRPPENK) the composition is skewed to basic and acidic residues. The segment at 1–26 (MAEMEKEGRPPENKRSRKPAHPVKRE) is disordered. 2 FCS-type zinc fingers span residues 142-180 (DDVS…KCFA) and 216-256 (FKNN…KCLN). 3 disordered regions span residues 308–339 (RRKA…DTAN), 413–484 (RGPP…PGAP), and 550–646 (KPPN…PGVL). Residues 318-339 (AGQSQGPGPSASTTVSPSDTAN) are compositionally biased toward polar residues. The segment covering 417–433 (HHASNPNSPLSNPMLPG) has biased composition (low complexity). Pro residues predominate over residues 460–484 (IHPPSTPTMPGNPPGLLPPPPPGAP). Residues 614 to 625 (EHGRSEVVDLTR) are compositionally biased toward basic and acidic residues. The SUMO interaction motif 1 (SIM); mediates the binding to polysumoylated substrates motif lies at 620–624 (VVDLT). Position 629 is a phosphoserine (Ser629). The short motif at 653–657 (VIDLT) is the SUMO interaction motif 2 (SIM); mediates the binding to polysumoylated substrates element. Lys677 is covalently cross-linked (Glycyl lysine isopeptide (Lys-Gly) (interchain with G-Cter in SUMO2)). Ser699 carries the post-translational modification Phosphoserine. The tract at residues 730 to 771 (AAAEGAKSAEPPPEQPPPPPPPAPPKKLLSPEEPAVSELESV) is disordered. Over residues 739–754 (EPPPEQPPPPPPPAPP) the composition is skewed to pro residues.

It belongs to the SOBP family. Interacts (via SIM domains) with SUMO1 and SUMO2.

Its function is as follows. Implicated in development of the cochlea. The protein is Sine oculis-binding protein homolog of Homo sapiens (Human).